The following is a 357-amino-acid chain: Poly(3-hydroxyalkanoate) polymerase subunit PhaE (357 aa).

The tract at residues 320-357 (AALAGEEPATKPATALRSPAPAAKAPARRRTTKTNPAD) is disordered. The segment covering 331-344 (PATALRSPAPAAKA) has biased composition (low complexity).

This sequence belongs to the PHA/PHB synthase family. Type III PhaE subfamily. As to quaternary structure, a large complex of PhaC and PhaE; the ratio of the subunits has been estimated to be from 1:1 to 4:1, with more PhaE than PhaC.

The protein localises to the cytoplasm. It functions in the pathway biopolymer metabolism; poly-(R)-3-hydroxybutanoate biosynthesis. Polymerizes D(-)-3-hydroxybutyryl-CoA to create polyhydroxybutyrate (PHB) which consists of thousands of hydroxybutyrate molecules linked end to end. This subunit has no catalytic activity but enhances the activity of PhaC, the catalytic subunit, 100-fold. The polypeptide is Poly(3-hydroxyalkanoate) polymerase subunit PhaE (Allochromatium vinosum (strain ATCC 17899 / DSM 180 / NBRC 103801 / NCIMB 10441 / D) (Chromatium vinosum)).